Reading from the N-terminus, the 623-residue chain is ATPase expression protein 3 (623 aa).

PPR repeat units lie at residues 217-251 (SVQC…GCKP), 252-292 (NTTT…NGIF), 362-396 (NLKF…QLKF), 405-439 (NSET…LVGP), and 445-479 (NVNT…SERY).

It is found in the mitochondrion inner membrane. Its function is as follows. Required for respiration. The chain is ATPase expression protein 3 (AEP3) from Candida glabrata (strain ATCC 2001 / BCRC 20586 / JCM 3761 / NBRC 0622 / NRRL Y-65 / CBS 138) (Yeast).